A 268-amino-acid polypeptide reads, in one-letter code: MLGFFAVYGNPITHSKSPFLHNYAFTKLGLSGYYSRILLDKGANLRQNFLSNGLSGANITLPFKEEAFNQCDEVRGVAQNIGACNTWVLEDKNHLVGYNTDAQGFYECIKEYKIKNALIIGAGGSAKAVAMILQSHNIPTTLINRSVQNLSFFVHKGFECYVNSEFKPTCSYDILINTTSAGLNDNLLPCDESQLKELCSCGKYAFDLIYGKCTPFLALAQSFHLSCSDGKEMLINQAALSFELFCKQKYNKGNLEIQRIASFMNEIL.

Shikimate is bound by residues 15-17 and Thr-60; that span reads SKS. Lys-64 serves as the catalytic Proton acceptor. Residues Asn-85 and Asp-101 each coordinate shikimate. Residues 121-125 and Leu-208 contribute to the NADP(+) site; that span reads GAGGS. Tyr-210 serves as a coordination point for shikimate. Residue Gly-230 coordinates NADP(+).

Belongs to the shikimate dehydrogenase family. As to quaternary structure, homodimer.

It catalyses the reaction shikimate + NADP(+) = 3-dehydroshikimate + NADPH + H(+). It functions in the pathway metabolic intermediate biosynthesis; chorismate biosynthesis; chorismate from D-erythrose 4-phosphate and phosphoenolpyruvate: step 4/7. Functionally, involved in the biosynthesis of the chorismate, which leads to the biosynthesis of aromatic amino acids. Catalyzes the reversible NADPH linked reduction of 3-dehydroshikimate (DHSA) to yield shikimate (SA). This Helicobacter hepaticus (strain ATCC 51449 / 3B1) protein is Shikimate dehydrogenase (NADP(+)).